A 398-amino-acid chain; its full sequence is Nicotinate phosphoribosyltransferase (398 aa).

Phosphohistidine; by autocatalysis is present on H222.

The protein belongs to the NAPRTase family. Transiently phosphorylated on a His residue during the reaction cycle. Phosphorylation strongly increases the affinity for substrates and increases the rate of nicotinate D-ribonucleotide production. Dephosphorylation regenerates the low-affinity form of the enzyme, leading to product release.

The enzyme catalyses nicotinate + 5-phospho-alpha-D-ribose 1-diphosphate + ATP + H2O = nicotinate beta-D-ribonucleotide + ADP + phosphate + diphosphate. Its pathway is cofactor biosynthesis; NAD(+) biosynthesis; nicotinate D-ribonucleotide from nicotinate: step 1/1. Its function is as follows. Catalyzes the synthesis of beta-nicotinate D-ribonucleotide from nicotinate and 5-phospho-D-ribose 1-phosphate at the expense of ATP. This is Nicotinate phosphoribosyltransferase from Acidovorax ebreus (strain TPSY) (Diaphorobacter sp. (strain TPSY)).